Here is a 312-residue protein sequence, read N- to C-terminus: Olfactory receptor 1D2 (312 aa).

Topologically, residues 1-25 are extracellular; sequence MDGGNQSEGSEFLLLGMSESPEQQQ. The N-linked (GlcNAc...) asparagine glycan is linked to Asn-5. The chain crosses the membrane as a helical span at residues 26–49; it reads ILFWMFLSMYLVTVVGNVLIILAI. Over 50–57 the chain is Cytoplasmic; sequence NSDSHLHT. The chain crosses the membrane as a helical span at residues 58–79; that stretch reads PMYFFLANLSFTDLFFVTNTIP. Over 80 to 100 the chain is Extracellular; it reads KMLVNLQSQNKAISYAGCLTQ. Cysteines 97 and 189 form a disulfide. Residues 101–120 form a helical membrane-spanning segment; the sequence is LYFLVSLVALDNLILAVMAY. Residues 121 to 139 lie on the Cytoplasmic side of the membrane; it reads DRYVAICCPLHYTTAMSPK. Residues 140–158 traverse the membrane as a helical segment; it reads LCILLLSLCWVLSVLYGLI. The Extracellular portion of the chain corresponds to 159-196; sequence HTILMTRVTFCGSRKIHYIFCEMYVLLRMACSNIQINH. N-linked (GlcNAc...) asparagine glycosylation occurs at Asn-195. The chain crosses the membrane as a helical span at residues 197–219; sequence TVLIATGCFIFLIPFGFVIISYV. Topologically, residues 220 to 236 are cytoplasmic; that stretch reads LIIRAILRIPSVSKKYK. The helical transmembrane segment at 237–259 threads the bilayer; that stretch reads AFSTCASHLGAVSLFYGTLCMVY. Topologically, residues 260–271 are extracellular; sequence LKPLHTFSVKDS. The helical transmembrane segment at 272-291 threads the bilayer; the sequence is VATVMYAVVTPMMNPFIYSL. At 292-312 the chain is on the cytoplasmic side; sequence RNKDMHGALGRLLDTHFKRLT.

The protein belongs to the G-protein coupled receptor 1 family.

The protein localises to the cell membrane. Functionally, odorant receptor. The sequence is that of Olfactory receptor 1D2 (OR1D2) from Gorilla gorilla gorilla (Western lowland gorilla).